Here is a 342-residue protein sequence, read N- to C-terminus: Mitochondrial sorting homolog (342 aa).

Topologically, residues 1 to 6 (MTDRNE) are mitochondrial intermembrane. A helical membrane pass occupies residues 7 to 25 (LIGVAIRVVAAAAVSFLSV). Residues 26–342 (RYLVKYLDPN…AHLLVEETLD (317 aa)) are Cytoplasmic-facing. 124 to 131 (GPPGCGKT) is an ATP binding site.

The protein belongs to the AAA ATPase family.

It localises to the mitochondrion outer membrane. Its function is as follows. Involved in intramitochondrial sorting of proteins. This chain is Mitochondrial sorting homolog (mspn-1), found in Caenorhabditis elegans.